We begin with the raw amino-acid sequence, 204 residues long: Large ribosomal subunit protein uL4 (204 aa).

The segment at 44–76 (KRQGTQSAKTRSEVRGGGIKPWRQKGTGRARQG) is disordered.

This sequence belongs to the universal ribosomal protein uL4 family. In terms of assembly, part of the 50S ribosomal subunit.

Its function is as follows. One of the primary rRNA binding proteins, this protein initially binds near the 5'-end of the 23S rRNA. It is important during the early stages of 50S assembly. It makes multiple contacts with different domains of the 23S rRNA in the assembled 50S subunit and ribosome. Functionally, forms part of the polypeptide exit tunnel. This is Large ribosomal subunit protein uL4 from Clostridium perfringens (strain ATCC 13124 / DSM 756 / JCM 1290 / NCIMB 6125 / NCTC 8237 / Type A).